The primary structure comprises 572 residues: Probable D-xylulose kinase A (572 aa).

Substrate contacts are provided by histidine 95, arginine 166, aspartate 282, and asparagine 283. Residues tryptophan 365, 470–471 (GG), and asparagine 474 contribute to the ATP site.

The protein belongs to the FGGY kinase family.

Its subcellular location is the cytoplasm. The enzyme catalyses D-xylulose + ATP = D-xylulose 5-phosphate + ADP + H(+). Its function is as follows. Highly specific D-xylulose kinase which participates in the catabolism of xylose. Xylose is a major component of hemicelluloses such as xylan. Most fungi utilize D-xylose via three enzymatic reactions, xylose reductase (XR), xylitol dehydrogenase (XDH), and xylulokinase, to form xylulose 5-phosphate, which enters pentose phosphate pathway. The polypeptide is Probable D-xylulose kinase A (xkiA) (Aspergillus flavus (strain ATCC 200026 / FGSC A1120 / IAM 13836 / NRRL 3357 / JCM 12722 / SRRC 167)).